The primary structure comprises 98 residues: MSMVYINIFLAFTLSFMGLLIYRSHLMSSLLCLEGMMLSLFVMMTVTILTNHLTLASMTPIILLVFAACEAALGLSLLVMISNTYGTDYVQNLNLLQC.

The next 3 helical transmembrane spans lie at 1 to 21 (MSMV…GLLI), 30 to 50 (LLCL…TILT), and 61 to 81 (IILL…LVMI).

This sequence belongs to the complex I subunit 4L family. Core subunit of respiratory chain NADH dehydrogenase (Complex I) which is composed of 45 different subunits.

The protein localises to the mitochondrion inner membrane. The catalysed reaction is a ubiquinone + NADH + 5 H(+)(in) = a ubiquinol + NAD(+) + 4 H(+)(out). In terms of biological role, core subunit of the mitochondrial membrane respiratory chain NADH dehydrogenase (Complex I) which catalyzes electron transfer from NADH through the respiratory chain, using ubiquinone as an electron acceptor. Part of the enzyme membrane arm which is embedded in the lipid bilayer and involved in proton translocation. The chain is NADH-ubiquinone oxidoreductase chain 4L (MT-ND4L) from Gulo gulo (Wolverine).